The primary structure comprises 577 residues: Arginine--tRNA ligase (577 aa).

The 'HIGH' region signature appears at 122–132 (PNVAKEMHVGH).

The protein belongs to the class-I aminoacyl-tRNA synthetase family. In terms of assembly, monomer.

It localises to the cytoplasm. The enzyme catalyses tRNA(Arg) + L-arginine + ATP = L-arginyl-tRNA(Arg) + AMP + diphosphate. The polypeptide is Arginine--tRNA ligase (Haemophilus influenzae (strain PittGG)).